Here is a 51-residue protein sequence, read N- to C-terminus: Large ribosomal subunit protein eL39 (51 aa).

This sequence belongs to the eukaryotic ribosomal protein eL39 family.

In terms of biological role, binds specifically to a region in 26S rRNA near the subunit interface. The protein is Large ribosomal subunit protein eL39 (rpl39e) of Sulfolobus acidocaldarius (strain ATCC 33909 / DSM 639 / JCM 8929 / NBRC 15157 / NCIMB 11770).